A 126-amino-acid polypeptide reads, in one-letter code: Large ribosomal subunit protein uL22 (126 aa).

The protein belongs to the universal ribosomal protein uL22 family. As to quaternary structure, part of the 50S ribosomal subunit.

In terms of biological role, this protein binds specifically to 23S rRNA; its binding is stimulated by other ribosomal proteins, e.g. L4, L17, and L20. It is important during the early stages of 50S assembly. It makes multiple contacts with different domains of the 23S rRNA in the assembled 50S subunit and ribosome. Functionally, the globular domain of the protein is located near the polypeptide exit tunnel on the outside of the subunit, while an extended beta-hairpin is found that lines the wall of the exit tunnel in the center of the 70S ribosome. The polypeptide is Large ribosomal subunit protein uL22 (Sphingopyxis alaskensis (strain DSM 13593 / LMG 18877 / RB2256) (Sphingomonas alaskensis)).